The chain runs to 657 residues: Transcription factor 12 (657 aa).

Polar residues predominate over residues 1 to 20 (MDEKGGTTSWGTSGQPSPSY). Disordered stretches follow at residues 1–76 (MDEK…SGLS), 89–285 (LGSP…QTGD), 297–340 (PDHT…YENS), 459–555 (VSAQ…ERRM), and 628–657 (KVSA…MGHM). Basic and acidic residues predominate over residues 30 to 43 (HYSDHLNDSRKGTH). Composition is skewed to polar residues over residues 49–70 (TPFS…SLYS) and 93–112 (AQLS…SATS). Residues 68–89 (LYSRDSGLSGCQSSLLRQELGL) are leucine-zipper. A Nuclear localization signal motif is present at residues 130–136 (KKVRKVP). Composition is skewed to polar residues over residues 168–193 (MFAS…NGMS), 202–216 (GTST…SYGS), and 230–254 (VSPT…SSSP). Residues 300–311 (TSSSFPSNPSTP) show a composition bias toward low complexity. The span at 312-340 (VGSPSPLTGASQWSRSGGQAPSSPNYENS) shows a compositional bias: polar residues. Composition is skewed to basic and acidic residues over residues 493–505 (IKSE…ENIH), 511–526 (DDMK…DIKV), and 543–555 (PEQK…ERRM). A bHLH domain is found at 552–605 (ERRMANNARERLRVRDINEAFKELGRMCQLHLKSEKPQTKLLILHQAVAVILSL). The interval 607–630 (QQVRERNLNPKAACLKRREEEKVS) is class A specific domain. Over residues 648–657 (SETTNPMGHM) the composition is skewed to polar residues.

Efficient DNA binding requires dimerization with another bHLH protein. Forms homo- or heterooligomers with myogenin, E12 and ITF2 proteins.

Its subcellular location is the nucleus. Functionally, transcriptional regulator. Involved in the initiation of neuronal differentiation. Activates transcription by binding to the E box-containing promoter. The sequence is that of Transcription factor 12 (TCF12) from Gallus gallus (Chicken).